Reading from the N-terminus, the 125-residue chain is Phosphoribosyl-AMP cyclohydrolase (125 aa).

Aspartate 74 provides a ligand contact to Mg(2+). Position 75 (cysteine 75) interacts with Zn(2+). 2 residues coordinate Mg(2+): aspartate 76 and aspartate 78. Zn(2+) contacts are provided by cysteine 92 and cysteine 99.

The protein belongs to the PRA-CH family. In terms of assembly, homodimer. The cofactor is Mg(2+). It depends on Zn(2+) as a cofactor.

The protein resides in the cytoplasm. The catalysed reaction is 1-(5-phospho-beta-D-ribosyl)-5'-AMP + H2O = 1-(5-phospho-beta-D-ribosyl)-5-[(5-phospho-beta-D-ribosylamino)methylideneamino]imidazole-4-carboxamide. Its pathway is amino-acid biosynthesis; L-histidine biosynthesis; L-histidine from 5-phospho-alpha-D-ribose 1-diphosphate: step 3/9. Its function is as follows. Catalyzes the hydrolysis of the adenine ring of phosphoribosyl-AMP. The protein is Phosphoribosyl-AMP cyclohydrolase of Desulfatibacillum aliphaticivorans.